A 373-amino-acid polypeptide reads, in one-letter code: CASP-like protein UU6 (373 aa).

Disordered regions lie at residues Met1–Gly100 and Thr172–Lys195. Topologically, residues Met1–Ala204 are cytoplasmic. The segment covering Lys56–Thr74 has biased composition (polar residues). Residues Ile205 to Val225 traverse the membrane as a helical segment. At Val226 to Arg253 the chain is on the extracellular side. Residues Tyr254 to Leu274 form a helical membrane-spanning segment. Over Tyr275–Thr276 the chain is Cytoplasmic. The helical transmembrane segment at Val277–Phe297 threads the bilayer. Residues Asp298–Asp342 lie on the Extracellular side of the membrane. Asn317 is a glycosylation site (N-linked (GlcNAc...) asparagine). The helical transmembrane segment at Val343 to Ile363 threads the bilayer. Residues Tyr364–Tyr373 lie on the Cytoplasmic side of the membrane.

The protein belongs to the Casparian strip membrane proteins (CASP) family. As to quaternary structure, homodimer and heterodimers.

It is found in the cell membrane. The sequence is that of CASP-like protein UU6 from Physcomitrium patens (Spreading-leaved earth moss).